The primary structure comprises 225 residues: LHFPL tetraspan subfamily member 2a protein (225 aa).

Transmembrane regions (helical) follow at residues 11–31 (MLWTLLSIVAAFSELIAFLST), 99–119 (IFLAAGILLLCAVAFISIFTM), 129–149 (IFNVCGLLQAIAGLFLIVGLV), and 178–198 (AGWAFYTALAGTVLCFLCAVF).

Belongs to the LHFP family.

It localises to the membrane. Functionally, plays a role in fertility. Involved in distal reproductive tract development. In Danio rerio (Zebrafish), this protein is LHFPL tetraspan subfamily member 2a protein.